A 350-amino-acid chain; its full sequence is Dihydroorotate dehydrogenase (quinone) (350 aa).

FMN contacts are provided by residues 59–63 (AGLDK) and threonine 83. Lysine 63 lines the substrate pocket. 108-112 (NRMGF) is a binding site for substrate. FMN is bound by residues asparagine 136 and asparagine 169. Asparagine 169 contacts substrate. Residue serine 172 is the Nucleophile of the active site. Position 174 (asparagine 174) interacts with substrate. Positions 214 and 242 each coordinate FMN. 243 to 244 (NT) is a substrate binding site. Residues glycine 265, glycine 294, and 315 to 316 (YS) each bind FMN.

It belongs to the dihydroorotate dehydrogenase family. Type 2 subfamily. In terms of assembly, monomer. It depends on FMN as a cofactor.

Its subcellular location is the cell membrane. It carries out the reaction (S)-dihydroorotate + a quinone = orotate + a quinol. It participates in pyrimidine metabolism; UMP biosynthesis via de novo pathway; orotate from (S)-dihydroorotate (quinone route): step 1/1. Its function is as follows. Catalyzes the conversion of dihydroorotate to orotate with quinone as electron acceptor. In Aromatoleum aromaticum (strain DSM 19018 / LMG 30748 / EbN1) (Azoarcus sp. (strain EbN1)), this protein is Dihydroorotate dehydrogenase (quinone).